We begin with the raw amino-acid sequence, 594 residues long: Shugoshin (594 aa).

Residues lysine 38–serine 61 adopt a coiled-coil conformation. 4 disordered regions span residues serine 104–arginine 178, glutamine 201–asparagine 266, serine 342–arginine 380, and threonine 519–glutamine 549. The stretch at glutamate 220–asparagine 240 forms a coiled coil. Positions glutamine 224–glutamate 239 are enriched in basic and acidic residues. The span at serine 252–serine 261 shows a compositional bias: polar residues. Residues lysine 343 to leucine 355 are compositionally biased toward basic residues. Over residues glycine 357–glutamate 376 the composition is skewed to basic and acidic residues. Composition is skewed to polar residues over residues threonine 519–asparagine 532 and asparagine 539–glutamine 549.

This sequence belongs to the shugoshin family.

Its subcellular location is the nucleus. It localises to the chromosome. The protein resides in the centromere. Plays a central role in chromosome cohesion during cell division by preventing premature dissociation of cohesin complex from centromeres after prophase, when most of cohesin complex dissociates from chromosomes arms. The polypeptide is Shugoshin (SGO1) (Kluyveromyces lactis (strain ATCC 8585 / CBS 2359 / DSM 70799 / NBRC 1267 / NRRL Y-1140 / WM37) (Yeast)).